Consider the following 485-residue polypeptide: UDP-glycosyltransferase 71B2 (485 aa).

UDP-alpha-D-glucose is bound by residues serine 287, 354–356, 371–379, and 393–396; these read APQ, HCGWNSTLE, and YAEQ.

The protein belongs to the UDP-glycosyltransferase family.

Glucosyltransferase that glucosylates the cell wall inhibitor hypostatin in vivo to form a bioactive glucoside. This is UDP-glycosyltransferase 71B2 (UGT71B2) from Arabidopsis thaliana (Mouse-ear cress).